The following is a 396-amino-acid chain: Ribosomal RNA large subunit methyltransferase I (396 aa).

Residues threonine 2–arginine 81 enclose the PUA domain.

This sequence belongs to the methyltransferase superfamily. RlmI family.

The protein localises to the cytoplasm. It carries out the reaction cytidine(1962) in 23S rRNA + S-adenosyl-L-methionine = 5-methylcytidine(1962) in 23S rRNA + S-adenosyl-L-homocysteine + H(+). Its function is as follows. Specifically methylates the cytosine at position 1962 (m5C1962) of 23S rRNA. The polypeptide is Ribosomal RNA large subunit methyltransferase I (Aliivibrio fischeri (strain ATCC 700601 / ES114) (Vibrio fischeri)).